The sequence spans 236 residues: 2-C-methyl-D-erythritol 4-phosphate cytidylyltransferase (236 aa).

It belongs to the IspD/TarI cytidylyltransferase family. IspD subfamily. Homodimer.

It catalyses the reaction 2-C-methyl-D-erythritol 4-phosphate + CTP + H(+) = 4-CDP-2-C-methyl-D-erythritol + diphosphate. It functions in the pathway isoprenoid biosynthesis; isopentenyl diphosphate biosynthesis via DXP pathway; isopentenyl diphosphate from 1-deoxy-D-xylulose 5-phosphate: step 2/6. Its function is as follows. Catalyzes the formation of 4-diphosphocytidyl-2-C-methyl-D-erythritol from CTP and 2-C-methyl-D-erythritol 4-phosphate (MEP). The protein is 2-C-methyl-D-erythritol 4-phosphate cytidylyltransferase of Salmonella paratyphi C (strain RKS4594).